Reading from the N-terminus, the 703-residue chain is MERAAPSRRVPLPLLLLGGLALLAAGVDADVLLEACCADGHRMATHQKDCSLPYATESKECRMVQEQCCHSQLEELHCATGISLANEQDRCATPHGDNASLEATFVKRCCHCCLLGRAAQAQGQSCEYSLMVGYQCGQVFQACCVKSQETGDLDVGGLQETDKIIEVEEEQEDPYLNDRCRGGGPCKQQCRDTGDEVVCSCFVGYQLLSDGVSCEDVNECITGSHSCRLGESCINTVGSFRCQRDSSCGTGYELTEDNSCKDIDECESGIHNCLPDFICQNTLGSFRCRPKLQCKSGFIQDALGNCIDINECLSISAPCPIGHTCINTEGSYTCQKNVPNCGRGYHLNEEGTRCVDVDECAPPAEPCGKGHRCVNSPGSFRCECKTGYYFDGISRMCVDVNECQRYPGRLCGHKCENTLGSYLCSCSVGFRLSVDGRSCEDINECSSSPCSQECANVYGSYQCYCRRGYQLSDVDGVTCEDIDECALPTGGHICSYRCINIPGSFQCSCPSSGYRLAPNGRNCQDIDECVTGIHNCSINETCFNIQGGFRCLAFECPENYRRSAATLQQEKTDTVRCIKSCRPNDVTCVFDPVHTISHTVISLPTFREFTRPEEIIFLRAITPPHPASQANIIFDITEGNLRDSFDIIKRYMDGMTVGVVRQVRPIVGPFHAVLKLEMNYVVGGVVSHRNVVNVHIFVSEYWF.

The signal sequence occupies residues 1 to 29; that stretch reads MERAAPSRRVPLPLLLLGGLALLAAGVDA. 35 cysteine pairs are disulfide-bonded: C36-C61, C37-C68, C50-C69, C78-C109, C91-C110, C112-C136, C113-C143, C126-C144, C180-C190, C186-C199, C201-C214, C220-C233, C227-C242, C248-C260, C266-C279, C273-C288, C294-C306, C312-C325, C319-C334, C341-C354, C360-C373, C367-C382, C384-C397, C403-C415, C411-C424, C426-C439, C445-C454, C450-C463, C465-C479, C485-C498, C494-C507, C509-C523, C529-C542, C536-C551, and C556-C577. Anaphylatoxin-like domains are found at residues 36 to 76, 77 to 111, and 112 to 144; these read CCAD…LEEL, HCAT…RCCH, and CCLL…QACC. N98 is a glycosylation site (N-linked (GlcNAc...) (complex) asparagine). An EGF-like 1 domain is found at 176–215; the sequence is LNDRCRGGGPCKQQCRDTGDEVVCSCFVGYQLLSDGVSCE. The region spanning 216-261 is the EGF-like 2; calcium-binding domain; that stretch reads DVNECITGSHSCRLGESCINTVGSFRCQRDSSCGTGYELTEDNSCK. In terms of domain architecture, EGF-like 3; calcium-binding spans 262–307; that stretch reads DIDECESGIHNCLPDFICQNTLGSFRCRPKLQCKSGFIQDALGNCI. In terms of domain architecture, EGF-like 4; calcium-binding spans 308 to 355; it reads DINECLSISAPCPIGHTCINTEGSYTCQKNVPNCGRGYHLNEEGTRCV. The EGF-like 5; calcium-binding domain maps to 356–398; it reads DVDECAPPAEPCGKGHRCVNSPGSFRCECKTGYYFDGISRMCV. A self-association and FN1-binding; calcium is necessary for homotypic binding, but not for heterotypic binding region spans residues 356–440; that stretch reads DVDECAPPAE…RLSVDGRSCE (85 aa). Residues 399-440 form the EGF-like 6; calcium-binding domain; sequence DVNECQRYPGRLCGHKCENTLGSYLCSCSVGFRLSVDGRSCE. Residues 441–480 form the EGF-like 7; calcium-binding domain; the sequence is DINECSSSPCSQECANVYGSYQCYCRRGYQLSDVDGVTCE. One can recognise an EGF-like 8; calcium-binding domain in the interval 481–524; the sequence is DIDECALPTGGHICSYRCINIPGSFQCSCPSSGYRLAPNGRNCQ. The EGF-like 9; calcium-binding domain occupies 525–578; the sequence is DIDECVTGIHNCSINETCFNIQGGFRCLAFECPENYRRSAATLQQEKTDTVRCI. N-linked (GlcNAc...) asparagine glycosylation is found at N535 and N539.

Belongs to the fibulin family. Homomultimerizes and interacts with various extracellular matrix components such as FN1, LAMA1, LAMA2, NID, ACAN, CSPG2 and type IV collagen. Also interacts with APP and FGB. Interacts with FBLN7. Interacts with CCN3. In terms of assembly, (Microbial infection) Interacts with human papillomavirus/HPV type 16, 18 and 31 proteins E6. As to expression, isoform A and isoform B are only expressed in placenta. Isoform C and isoform D are expressed in a variety of tissues and cultured cells.

It is found in the secreted. The protein localises to the extracellular space. Its subcellular location is the extracellular matrix. Functionally, incorporated into fibronectin-containing matrix fibers. May play a role in cell adhesion and migration along protein fibers within the extracellular matrix (ECM). Could be important for certain developmental processes and contribute to the supramolecular organization of ECM architecture, in particular to those of basement membranes. Has been implicated in a role in cellular transformation and tumor invasion, it appears to be a tumor suppressor. May play a role in haemostasis and thrombosis owing to its ability to bind fibrinogen and incorporate into clots. Could play a significant role in modulating the neurotrophic activities of APP, particularly soluble APP. This is Fibulin-1 (FBLN1) from Homo sapiens (Human).